The sequence spans 1012 residues: PHD finger protein 20 (1012 aa).

2 consecutive Tudor domains span residues 4–69 (HPPN…RPLE) and 83–147 (GSSE…GNAR). Residues 142 to 336 (IVGNARPKET…RSSRLSTNGT (195 aa)) form a disordered region. Positions 147-245 (RPKETDHKSL…QVDKKPENDI (99 aa)) are enriched in basic and acidic residues. Ser-159 is subject to Phosphoserine. Positions 257–269 (KRKRGRPPSIAPT) form a DNA-binding region, a.T hook. A compositionally biased stretch (polar residues) spans 271-280 (VDSNSQTLQP). The segment covering 297–325 (PLKRPRLDKNSSQEKSKNYSENTDKDLSR) has biased composition (basic and acidic residues). The C2H2-type zinc-finger motif lies at 452-477 (FRCKVVDCLKFFRKAKLLHYHMKYFH). Residues 481 to 490 (KSLEPEESPG) show a composition bias toward basic and acidic residues. The disordered stretch occupies residues 481-611 (KSLEPEESPG…KGKVKALEED (131 aa)). Ser-488 is modified (phosphoserine). The segment covering 497-509 (RGPSASDKPSQET) has biased composition (polar residues). Basic and acidic residues predominate over residues 522 to 538 (TKDKEKNKEKKFKEFVR). A compositionally biased stretch (basic residues) spans 539–551 (VKPKKKKKKKKKT). A PHD-type zinc finger spans residues 654-700 (RCICEVQEENDFMIQCEECQCWQHGVCMGLLEENVPEKYTCYVCQDP). N6-acetyllysine is present on Lys-843. The interval 866 to 912 (DAVNPLHENGDDSLSPRLGWPLDQDRSKGDSDPKPGSPKVKEYVSKK) is disordered. Ser-878 and Ser-880 each carry phosphoserine. Residues 888-912 (DQDRSKGDSDPKPGSPKVKEYVSKK) are compositionally biased toward basic and acidic residues.

As to quaternary structure, homodimer; disulfide-linked. Component of some MLL1/MLL complex, at least composed of the core components KMT2A/MLL1, ASH2L, HCFC1, WDR5 and RBBP5, as well as the facultative components BACC1, CHD8, E2F6, HSP70, INO80C, KANSL1, LAS1L, MAX, MCRS1, MGA, KAT8/MOF, PELP1, PHF20, PRP31, RING2, RUVB1/TIP49A, RUVB2/TIP49B, SENP3, TAF1, TAF4, TAF6, TAF7, TAF9 and TEX10. Component of the NSL complex at least composed of MOF/KAT8, KANSL1, KANSL2, KANSL3, MCRS1, PHF20, OGT1/OGT, WDR5 and HCFC1. Ubiquitinated by TRIM26; leading to proteasomal degradation. In terms of tissue distribution, expressed in heart, kidney, liver, lung, pancreas, placenta, spleen and testis. Not expressed in brain, skeletal muscle, colon, ovary, prostate, small intestine and thymus. Expressed in colon and ovary cancer cell lines while it is not expressed in the respective normal tissues.

Its subcellular location is the nucleus. In terms of biological role, methyllysine-binding protein, component of the MOF histone acetyltransferase protein complex. Not required for maintaining the global histone H4 'Lys-16' acetylation (H4K16ac) levels or locus specific histone acetylation, but instead works downstream in transcriptional regulation of MOF target genes. As part of the NSL complex it may be involved in acetylation of nucleosomal histone H4 on several lysine residues. Contributes to methyllysine-dependent p53/TP53 stabilization and up-regulation after DNA damage. The chain is PHD finger protein 20 (PHF20) from Homo sapiens (Human).